Reading from the N-terminus, the 517-residue chain is Recombining binding protein suppressor of hairless-like protein (517 aa).

The span at 26 to 37 shows a compositional bias: basic and acidic residues; the sequence is EMQLQSEADRRS. Residues 26–48 are disordered; sequence EMQLQSEADRRSLPGTWTRSSPE. DNA-binding stretches follow at residues 78–88, 193–198, and 220–225; these read QKSYGNEKRFF, SKPSQK, and RLRSQT. Residues 387 to 512 enclose the IPT/TIG domain; that stretch reads LISTLELSGG…HQEFTRTNFH (126 aa).

This sequence belongs to the Su(H) family. As to quaternary structure, interacts weakly with EBNA2. Does not interact with any Notch proteins.

It is found in the nucleus. Putative transcription factor, which cooperates with EBNA2 to activate transcription. This is Recombining binding protein suppressor of hairless-like protein (RBPJL) from Homo sapiens (Human).